Consider the following 482-residue polypeptide: Long chain base biosynthesis protein 1c (482 aa).

A helical transmembrane segment spans residues 33–53 (FGIHIDGHLVVEGLLIAAILF).

This sequence belongs to the class-II pyridoxal-phosphate-dependent aminotransferase family. As to quaternary structure, heterodimer with LCB2. Component of the serine palmitoyltransferase (SPT) complex, composed of LCB1 and LCB2. Pyridoxal 5'-phosphate is required as a cofactor.

The protein localises to the endoplasmic reticulum membrane. The catalysed reaction is L-serine + hexadecanoyl-CoA + H(+) = 3-oxosphinganine + CO2 + CoA. Its pathway is lipid metabolism; sphingolipid metabolism. Functionally, serine palmitoyltransferase (SPT). The heterodimer formed with LCB2 constitutes the catalytic core. The chain is Long chain base biosynthesis protein 1c from Oryza sativa subsp. japonica (Rice).